A 472-amino-acid polypeptide reads, in one-letter code: MASPALTGGYRNLTAPVSLLRTLASTRVTTPLFRSNKHSPRFISSPKRFTCLSLLKTDSQNQTTLSSSSNSGYHEYNRLMPCPAYNLPPRIEHMVVLEDDVLVSEFISKQLDLPPLYVADLIRFGAVHYALVCPKPPPTATPEEIILFEEVTSPSVLKKRSSIKGKTVREAQKTFRVTHTNQYAEAGTYLRVHVHPKRSPRCYEIDWKSRIVAVTDSYVILDKPAGTTVGGTTDNIEESCATFASRALDLPEPLKTTHQIDNCTEGCVVFARTKEYCSVFHTKIRNKEVKKLYRALAAAPLPIGIISHYMRPKNMAPRLVAEDSIQGWHLCQLEVLECKKIPWPDAATEKKHDIEDCGWTSKEFAYECTINLLTGKTHQIRAQLAACGAPLVGDSMYMPAAIAEMGNPDTNPYGKAKKHYTMEENQKETAVAEWIDRHGKEPRVGIGLQACQISWDDDDGEHFYEAGTPWWR.

The transit peptide at 1-66 (MASPALTGGY…TDSQNQTTLS (66 aa)) directs the protein to the chloroplast. The 108-residue stretch at 101–208 (VLVSEFISKQ…SPRCYEIDWK (108 aa)) folds into the S4 RNA-binding domain. Residue Asp261 is part of the active site.

Belongs to the pseudouridine synthase RluA family.

The protein resides in the plastid. Its subcellular location is the chloroplast. The catalysed reaction is a uridine in RNA = a pseudouridine in RNA. The sequence is that of RNA pseudouridine synthase 6, chloroplastic from Arabidopsis thaliana (Mouse-ear cress).